Consider the following 345-residue polypeptide: Anthranilate phosphoribosyltransferase (345 aa).

5-phospho-alpha-D-ribose 1-diphosphate-binding positions include G79, 82–83 (GD), T87, 89–92 (NVST), 106–114 (KHGNRAVSG), and S118. Position 79 (G79) interacts with anthranilate. S91 lines the Mg(2+) pocket. Residue N109 coordinates anthranilate. R164 serves as a coordination point for anthranilate. Positions 223 and 224 each coordinate Mg(2+).

Belongs to the anthranilate phosphoribosyltransferase family. As to quaternary structure, homodimer. Mg(2+) is required as a cofactor.

The enzyme catalyses N-(5-phospho-beta-D-ribosyl)anthranilate + diphosphate = 5-phospho-alpha-D-ribose 1-diphosphate + anthranilate. Its pathway is amino-acid biosynthesis; L-tryptophan biosynthesis; L-tryptophan from chorismate: step 2/5. In terms of biological role, catalyzes the transfer of the phosphoribosyl group of 5-phosphorylribose-1-pyrophosphate (PRPP) to anthranilate to yield N-(5'-phosphoribosyl)-anthranilate (PRA). This chain is Anthranilate phosphoribosyltransferase, found in Saccharolobus islandicus (strain M.14.25 / Kamchatka #1) (Sulfolobus islandicus).